We begin with the raw amino-acid sequence, 389 residues long: Stilbene synthase 3 (389 aa).

55 to 58 is a binding site for substrate; it reads KFQR. The active site involves C164. Residues L267 and 305-307 contribute to the substrate site; that span reads GGR.

Belongs to the thiolase-like superfamily. Chalcone/stilbene synthases family. In terms of assembly, homodimer.

The protein resides in the cytoplasm. The catalysed reaction is 4-coumaroyl-CoA + 3 malonyl-CoA + 3 H(+) = trans-resveratrol + 4 CO2 + 4 CoA. It participates in phytoalexin biosynthesis; 3,4',5-trihydroxystilbene biosynthesis; 3,4',5-trihydroxystilbene from trans-4-coumarate: step 2/2. The chain is Stilbene synthase 3 from Arachis hypogaea (Peanut).